The chain runs to 130 residues: MAREPRCRRVEYMPRVECFKPAGIPLSRLEEVQIKVEELEAIRLKDYLRLEQEDCARRMQVSRPTFQRILVEARAKIAYALSSGRAIRIEGGNYCMGAGYCRRRQREIREGEPCDFKGIAIRTESDATDN.

This sequence belongs to the UPF0251 family.

The chain is UPF0251 protein Swol_2090 from Syntrophomonas wolfei subsp. wolfei (strain DSM 2245B / Goettingen).